The primary structure comprises 404 residues: Imidazolonepropionase (404 aa).

Residues histidine 70 and histidine 72 each coordinate Fe(3+). Histidine 70 and histidine 72 together coordinate Zn(2+). 3 residues coordinate 4-imidazolone-5-propanoate: arginine 79, tyrosine 142, and histidine 174. Tyrosine 142 contributes to the N-formimidoyl-L-glutamate binding site. Histidine 234 contributes to the Fe(3+) binding site. Histidine 234 lines the Zn(2+) pocket. A 4-imidazolone-5-propanoate-binding site is contributed by glutamate 237. Aspartate 308 is a Fe(3+) binding site. Aspartate 308 contacts Zn(2+).

This sequence belongs to the metallo-dependent hydrolases superfamily. HutI family. Zn(2+) is required as a cofactor. Fe(3+) serves as cofactor.

It localises to the cytoplasm. It carries out the reaction 4-imidazolone-5-propanoate + H2O = N-formimidoyl-L-glutamate. Its pathway is amino-acid degradation; L-histidine degradation into L-glutamate; N-formimidoyl-L-glutamate from L-histidine: step 3/3. In terms of biological role, catalyzes the hydrolytic cleavage of the carbon-nitrogen bond in imidazolone-5-propanoate to yield N-formimidoyl-L-glutamate. It is the third step in the universal histidine degradation pathway. This chain is Imidazolonepropionase, found in Thermoplasma volcanium (strain ATCC 51530 / DSM 4299 / JCM 9571 / NBRC 15438 / GSS1).